The following is a 329-amino-acid chain: MLLKEYRICMPLTVEEYRIGQLYMISKHSHEQSERGEGVEVVQNEPYEDPVHGQGQLTEKRVYLNSKLPSWARAVVPKIFYVTEKAWNYYPYTITEYTCSFLPKFSIHIETKYEDNKGSNDNIFESEAKDAEREICFVDIACDEIPERYYKESEDPKNFVSEKTGRGQLKEGWREAQEPIMCSYKLVAVKFEVWGLQSRVEQFVHKVVRDILLIGHRQAFAWVDEWYDMTMDEVREYERTTQEATNRKIGVFPPAISISDITLPSHSHGGYSSAPSTPLATDAPEFLSVPKDRPRKKSAPETLTLPDPSQICLNVQPGAGNKPSLAKPE.

Residues 267–329 (SHGGYSSAPS…GNKPSLAKPE (63 aa)) form a disordered region.

Belongs to the PtdIns transfer protein family. PI transfer class IIB subfamily.

Its subcellular location is the cytoplasm. The enzyme catalyses a 1,2-diacyl-sn-glycero-3-phospho-(1D-myo-inositol)(in) = a 1,2-diacyl-sn-glycero-3-phospho-(1D-myo-inositol)(out). It carries out the reaction a 1,2-diacyl-sn-glycero-3-phosphate(in) = a 1,2-diacyl-sn-glycero-3-phosphate(out). Functionally, catalyzes the transfer of phosphatidylinositol (PI) and phosphatidic acid (PA) between membranes. Binds PA derived from the phospholipase D signaling pathway and among the cellular PA species, preferably binds to the C16:0/16:1 and C16:1/18:1 PA species. This Xenopus tropicalis (Western clawed frog) protein is Cytoplasmic phosphatidylinositol transfer protein 1 (pitpnc1).